Reading from the N-terminus, the 403-residue chain is Bifunctional enzyme IspD/IspF (403 aa).

A 2-C-methyl-D-erythritol 4-phosphate cytidylyltransferase region spans residues 1-234; it reads MPTSKRTAAI…ARLAAMLGDI (234 aa). The interval 235–403 is 2-C-methyl-D-erythritol 2,4-cyclodiphosphate synthase; the sequence is RTGTGYDVHA…SDQEDKGWST (169 aa). A divalent metal cation is bound by residues D241 and H243. 4-CDP-2-C-methyl-D-erythritol 2-phosphate contacts are provided by residues 241–243 and 267–268; these read DVH and HS. H275 provides a ligand contact to a divalent metal cation. 4-CDP-2-C-methyl-D-erythritol 2-phosphate is bound by residues 289 to 291, 365 to 368, F372, and R375; these read DIG and TTSE.

In the N-terminal section; belongs to the IspD/TarI cytidylyltransferase family. IspD subfamily. It in the C-terminal section; belongs to the IspF family. The cofactor is a divalent metal cation.

It catalyses the reaction 2-C-methyl-D-erythritol 4-phosphate + CTP + H(+) = 4-CDP-2-C-methyl-D-erythritol + diphosphate. It carries out the reaction 4-CDP-2-C-methyl-D-erythritol 2-phosphate = 2-C-methyl-D-erythritol 2,4-cyclic diphosphate + CMP. The protein operates within isoprenoid biosynthesis; isopentenyl diphosphate biosynthesis via DXP pathway; isopentenyl diphosphate from 1-deoxy-D-xylulose 5-phosphate: step 2/6. It participates in isoprenoid biosynthesis; isopentenyl diphosphate biosynthesis via DXP pathway; isopentenyl diphosphate from 1-deoxy-D-xylulose 5-phosphate: step 4/6. Functionally, bifunctional enzyme that catalyzes the formation of 4-diphosphocytidyl-2-C-methyl-D-erythritol from CTP and 2-C-methyl-D-erythritol 4-phosphate (MEP) (IspD), and catalyzes the conversion of 4-diphosphocytidyl-2-C-methyl-D-erythritol 2-phosphate (CDP-ME2P) to 2-C-methyl-D-erythritol 2,4-cyclodiphosphate (ME-CPP) with a corresponding release of cytidine 5-monophosphate (CMP) (IspF). This chain is Bifunctional enzyme IspD/IspF, found in Nitrobacter hamburgensis (strain DSM 10229 / NCIMB 13809 / X14).